The following is a 154-amino-acid chain: Endoribonuclease YbeY (154 aa).

His-113, His-117, and His-123 together coordinate Zn(2+).

Belongs to the endoribonuclease YbeY family. Zn(2+) serves as cofactor.

The protein resides in the cytoplasm. Single strand-specific metallo-endoribonuclease involved in late-stage 70S ribosome quality control and in maturation of the 3' terminus of the 16S rRNA. The polypeptide is Endoribonuclease YbeY (Ehrlichia canis (strain Jake)).